Reading from the N-terminus, the 1309-residue chain is Angiotensin-converting enzyme (1309 aa).

Positions 1 to 33 (MGAASGCRWPWPPLLPLLLMLLLPPPPLPVALA) are cleaved as a signal peptide. Residues 34–1259 (LDSALQPGNF…GLNLEEQQAR (1226 aa)) are Extracellular-facing. Asparagine 42, asparagine 58, asparagine 78, asparagine 115, asparagine 135, asparagine 150, and asparagine 164 each carry an N-linked (GlcNAc...) asparagine glycan. Peptidase M2 domains lie at 44–627 (TADE…LGWP) and 646–1225 (VSDE…LGWP). Residues cysteine 161 and cysteine 169 are joined by a disulfide bond. Tyrosine 235 is a chloride binding site. Asparagine 322 carries N-linked (GlcNAc...) asparagine glycosylation. A disulfide bridge links cysteine 363 with cysteine 381. Histidine 394 is a Zn(2+) binding site. Glutamate 395 (proton acceptor 1) is an active-site residue. Zn(2+)-binding residues include histidine 398 and glutamate 422. An N-linked (GlcNAc...) asparagine glycan is attached at asparagine 512. Catalysis depends on histidine 523, which acts as the Proton donor 1. An N-linked (GlcNAc...) asparagine glycan is attached at asparagine 526. Residue arginine 532 participates in chloride binding. Cysteines 548 and 560 form a disulfide. Residues asparagine 680, asparagine 698, asparagine 717, and asparagine 763 are each glycosylated (N-linked (GlcNAc...) asparagine). Cysteine 760 and cysteine 766 are joined by a disulfide. Chloride is bound by residues arginine 794 and tyrosine 832. Residue asparagine 945 is glycosylated (N-linked (GlcNAc...) asparagine). An intrachain disulfide couples cysteine 960 to cysteine 978. Position 991 (histidine 991) interacts with Zn(2+). Catalysis depends on glutamate 992, which acts as the Proton acceptor 2. Zn(2+) contacts are provided by histidine 995 and glutamate 1019. Chloride contacts are provided by tryptophan 1093 and arginine 1097. Histidine 1121 serves as the catalytic Proton donor 2. Chloride is bound at residue arginine 1130. Cysteine 1146 and cysteine 1158 form a disulfide bridge. N-linked (GlcNAc...) asparagine glycosylation is found at asparagine 1194 and asparagine 1228. The juxtamembrane stalk stretch occupies residues 1218–1259 (HGEKLGWPQYNWTPNSARLEGSFAGTGRVNFLGLNLEEQQAR). A helical membrane pass occupies residues 1260-1280 (VGQWVLLFLGVTLLVATMGLT). Topologically, residues 1281-1309 (QRLFSIRHQILRRTHRGPQFGSEVELRHS) are cytoplasmic. Serine 1302 carries the phosphoserine modification.

It belongs to the peptidase M2 family. Monomer and homodimer; homodimerizes following binding to an inhibitor. Interacts with calmodulin (CALM1, CALM2 or CALM3); interaction takes place in the cytoplasmic region and regulates phosphorylation and proteolytic cleavage. Zn(2+) is required as a cofactor. Chloride serves as cofactor. Produced following proteolytic cleavage by secretase enzymes that cleave the transmembrane form in the juxtamembrane stalk region upstream of the transmembrane region. Cleavage can take place at different sites of the juxtamembrane stalk region. In terms of processing, phosphorylated by CK2 on Ser-1302; which allows membrane retention. Phosphorylated on tyrosine residues on its extracellular part, promoting cleavage by secretase enzymes and formation of the soluble form (Angiotensin-converting enzyme, soluble form).

It is found in the cell membrane. The protein resides in the cytoplasm. It localises to the secreted. The enzyme catalyses Release of a C-terminal dipeptide, oligopeptide-|-Xaa-Yaa, when Xaa is not Pro, and Yaa is neither Asp nor Glu. Thus, conversion of angiotensin I to angiotensin II, with increase in vasoconstrictor activity, but no action on angiotensin II.. It catalyses the reaction angiotensin I + H2O = L-histidyl-L-leucine + angiotensin II. The catalysed reaction is bradykinin + H2O = L-Phe-L-Arg + bradykinin(1-7). It carries out the reaction substance P + H2O = substance P(1-9) + L-Leu-L-Met-NH2. The enzyme catalyses substance P + H2O = substance P(1-8) + Gly-L-Leu-L-Met-NH2. It catalyses the reaction substance P + H2O = L-Phe-L-Phe-Gly-L-Leu-L-Met-NH2 + substance P(1-6). The catalysed reaction is neurotensin + H2O = neurotensin(1-11) + L-isoleucyl-L-leucine. It carries out the reaction goralatide + H2O = N-acetyl-L-seryl-L-aspartate + L-lysyl-L-proline. The enzyme catalyses Met-enkephalin + H2O = L-phenylalanyl-L-methionine + L-tyrosylglycylglycine. It catalyses the reaction Leu-enkephalin + H2O = L-tyrosylglycylglycine + L-phenylalanyl-L-leucine. The catalysed reaction is Met-enkephalin-Arg-Phe + H2O = L-arginyl-L-phenylalanine + Met-enkephalin. Its activity is regulated as follows. The dipeptidyl carboxypeptidase activity is strongly activated by chloride. The dipeptidyl carboxypeptidase activity is specifically inhibited by lisinopril, captopril and enalaprilat. In terms of biological role, dipeptidyl carboxypeptidase that removes dipeptides from the C-terminus of a variety of circulating hormones, such as angiotensin I, bradykinin or enkephalins, thereby playing a key role in the regulation of blood pressure, electrolyte homeostasis or synaptic plasticity. Composed of two similar catalytic domains, each possessing a functional active site, with different selectivity for substrates. Plays a major role in the angiotensin-renin system that regulates blood pressure and sodium retention by the kidney by converting angiotensin I to angiotensin II, resulting in an increase of the vasoconstrictor activity of angiotensin. Also able to inactivate bradykinin, a potent vasodilator, and therefore enhance the blood pressure response. Acts as a regulator of synaptic transmission by mediating cleavage of neuropeptide hormones, such as substance P, neurotensin or enkephalins. Catalyzes degradation of different enkephalin neuropeptides (Met-enkephalin, Leu-enkephalin, Met-enkephalin-Arg-Phe and possibly Met-enkephalin-Arg-Gly-Leu). Acts as a regulator of synaptic plasticity in the nucleus accumbens of the brain by mediating cleavage of Met-enkephalin-Arg-Phe, a strong ligand of Mu-type opioid receptor OPRM1, into Met-enkephalin. Met-enkephalin-Arg-Phe cleavage by ACE decreases activation of OPRM1, leading to long-term synaptic potentiation of glutamate release. Also acts as a regulator of hematopoietic stem cell differentiation by mediating degradation of hemoregulatory peptide N-acetyl-SDKP (AcSDKP). Acts as a regulator of cannabinoid signaling pathway by mediating degradation of hemopressin, an antagonist peptide of the cannabinoid receptor CNR1. Involved in amyloid-beta metabolism by catalyzing degradation of Amyloid-beta protein 40 and Amyloid-beta protein 42 peptides, thereby preventing plaque formation. Catalyzes cleavage of cholecystokinin (maturation of Cholecystokinin-8 and Cholecystokinin-5) and Gonadoliberin-1 (both maturation and degradation) hormones. Degradation of hemoregulatory peptide N-acetyl-SDKP (AcSDKP) and amyloid-beta proteins is mediated by the N-terminal catalytic domain, while angiotensin I and cholecystokinin cleavage is mediated by the C-terminal catalytic region. Functionally, soluble form that is released in blood plasma and other body fluids following proteolytic cleavage in the juxtamembrane stalk region. This chain is Angiotensin-converting enzyme, found in Sus scrofa (Pig).